A 782-amino-acid polypeptide reads, in one-letter code: Spastin (782 aa).

The disordered stretch occupies residues 1 to 103 (MVRTKNQSSS…GNAPRGGNSS (103 aa)). Topologically, residues 1 to 115 (MVRTKNQSSS…KQNLYVVSFP (115 aa)) are cytoplasmic. Positions 1–212 (MVRTKNQSSS…RAIQPLEMAG (212 aa)) are required for localization to punctate cytoplasmic foci. Residues 8–19 (SSSSSASSSTKS) are compositionally biased toward low complexity. Residues 25-34 (GGTTNRSRSC) show a composition bias toward polar residues. 2 stretches are compositionally biased toward low complexity: residues 44-75 (SKSS…GSSP) and 84-93 (TTDADLTPTS). The segment at residues 116 to 136 (IIFLFNVLRSLIYQLFCIFRY) is an intramembrane region (helical). Over 137 to 782 (LYGASTKVIY…WSQDYGDITI (646 aa)) the chain is Cytoplasmic. The segment at 210–782 (MAGNRAGGNY…WSQDYGDITI (573 aa)) is sufficient for interaction with microtubules and microtubule severing. One can recognise an MIT domain in the interval 235-310 (HRRAFEYISK…SMARDRLHFL (76 aa)). The disordered stretch occupies residues 325–479 (KEQQQKKKSP…GSGSGASTPM (155 aa)). The segment covering 334 to 343 (PQQQPQQQQQ) has biased composition (low complexity). Polar residues-rich tracts occupy residues 408-426 (NKSQ…STSV) and 447-463 (QFSS…RTPI). The tract at residues 465–479 (NNAAGGSGSGASTPM) is required for interaction with microtubules. 547-554 (GPPGNGKT) contacts ATP.

The protein belongs to the AAA ATPase family. Spastin subfamily. As to quaternary structure, homohexamer. The homohexamer is stabilized by ATP-binding. The homohexamer may adopt a ring conformation through which microtubules pass prior to being severed. Interacts with microtubules. Interacts with atl; may be involved in microtubule dynamics.

The protein localises to the membrane. Its subcellular location is the cytoplasm. The protein resides in the cytoskeleton. It is found in the microtubule organizing center. It localises to the centrosome. The protein localises to the chromosome. Its subcellular location is the lipid droplet. It catalyses the reaction n ATP + n H2O + a microtubule = n ADP + n phosphate + (n+1) alpha/beta tubulin heterodimers.. In terms of biological role, ATP-dependent microtubule severing protein. Stimulates microtubule minus-end depolymerization and poleward microtubule flux in the mitotic spindle. Regulates microtubule stability in the neuromuscular junction synapse. Involved in lipid metabolism by regulating the size and distribution of lipid droplets. Involved in axon regeneration by regulating microtubule severing. The protein is Spastin of Drosophila grimshawi (Hawaiian fruit fly).